Consider the following 126-residue polypeptide: Pancreatic polypeptide prohormone (126 aa).

Positions 1–26 (MTATRCCLWLLLLGTCMALLLPEAWG) are cleaved as a signal peptide. At Tyr62 the chain carries Tyrosine amide. Residues 77-126 (RQSHAAAPGGSHRHPPAGLPAAKGGTGVSGSPPKPWDCLPCRAHSLPSQS) form a disordered region.

The protein belongs to the NPY family. In terms of processing, no icosapeptide-like peptide is cleaved from the C-terminal.

Its subcellular location is the secreted. In terms of biological role, hormone secreted by pancreatic cells that acts as a regulator of pancreatic and gastrointestinal functions probably by signaling through the G protein-coupled receptor NPY4R2. In Cavia porcellus (Guinea pig), this protein is Pancreatic polypeptide prohormone (PPY).